The primary structure comprises 147 residues: D-aminoacyl-tRNA deacylase (147 aa).

The Gly-cisPro motif, important for rejection of L-amino acids motif lies at 137 to 138; the sequence is GP.

The protein belongs to the DTD family. In terms of assembly, homodimer.

It is found in the cytoplasm. It catalyses the reaction glycyl-tRNA(Ala) + H2O = tRNA(Ala) + glycine + H(+). The enzyme catalyses a D-aminoacyl-tRNA + H2O = a tRNA + a D-alpha-amino acid + H(+). An aminoacyl-tRNA editing enzyme that deacylates mischarged D-aminoacyl-tRNAs. Also deacylates mischarged glycyl-tRNA(Ala), protecting cells against glycine mischarging by AlaRS. Acts via tRNA-based rather than protein-based catalysis; rejects L-amino acids rather than detecting D-amino acids in the active site. By recycling D-aminoacyl-tRNA to D-amino acids and free tRNA molecules, this enzyme counteracts the toxicity associated with the formation of D-aminoacyl-tRNA entities in vivo and helps enforce protein L-homochirality. The chain is D-aminoacyl-tRNA deacylase from Acinetobacter baumannii (strain ACICU).